The sequence spans 478 residues: Subtilisin-like protease 3 (478 aa).

The N-terminal stretch at 1 to 17 is a signal peptide; the sequence is MKFSTILPILWANCCLC. The region spanning 70 to 167 is the Inhibitor I9 domain; it reads RYVIVFNEDI…FVEQETTVKI (98 aa). The Peptidase S8 domain occupies 177 to 478; that stretch reads PWGLHRVSHR…GGGKKLDGFW (302 aa). Catalysis depends on charge relay system residues aspartate 213, histidine 245, and serine 407.

This sequence belongs to the peptidase S8 family.

Its function is as follows. Serine protease with unknown substrate. This is Subtilisin-like protease 3 (YSP3) from Saccharomyces cerevisiae (strain ATCC 204508 / S288c) (Baker's yeast).